The sequence spans 319 residues: Proline hydroxylase buaE (319 aa).

In terms of domain architecture, Fe2OG dioxygenase spans 168-280; that stretch reads NSSELRLNHY…RYSIAYFGKP (113 aa). His-195, Asp-197, and His-255 together coordinate Fe cation. 2-oxoglutarate is bound at residue Arg-271.

It belongs to the iron/ascorbate-dependent oxidoreductase family. The cofactor is Fe(2+).

It functions in the pathway mycotoxin biosynthesis. Functionally, proline hydroxylase; part of the gene cluster that mediates the biosynthesis of burnettramic acids, an unusual class of bolaamphiphilic pyrrolizidinediones that display potent antibacterial, antifungal, and cytotoxic activities. The first step of the biosynthesis of burnettramic acids is the hydroxylation of proline by the proline hydroxylase buaE to generate 4-hydroxyproline. The PKS-NRPS buaA and trans-enoyl reductase buaC construct the highly reduced polyketide chain, and the condensation (C) domain of buaA then catalyzes the amide bond formation with the activated 4-hydroxyproline. This is followed by the R domain releasing the nascent polyketide-peptide directly via a Dieckmann condensation to afford a tetramic acid fused to the hydroxyproline, generating the bicyclic pyrrolidinedione moiety. The cytochrome P450 monooxygenases buaD and buaG are likely responsible for the multiple hydroxylations on the polyketide chain and its terminus, although in the heterologous context, buaD does not appear to be required. Therefore, while buaG may be a multifunctional cytochrome P450 monooxygenase, it cannot be ruled out that the two secondary alcohols on the polyketide chain could have an acetate origin. Finally, the glycosyltransferase buaB transfers beta-D-mannose to the aglycone burnettramic acid A to form burnettramic acid A. Burnettramic acid B is a minor cis-pyrrolizidine epimer of burnettramic acid A and it is likely that small amounts of it form naturally in acidic environments. The polypeptide is Proline hydroxylase buaE (Petromyces alliaceus (Aspergillus alliaceus)).